A 384-amino-acid polypeptide reads, in one-letter code: Protein Brevis radix-like 4 (384 aa).

Disordered stretches follow at residues 1 to 35 (MLTCIARSKRAGDESSGQPDDPDSKNAKSLTSQLK) and 50 to 78 (PCTAAQGQGQGQGPIKNNPSSSSVKSDFE). The BRX 1 domain maps to 150–205 (KEWVAQVEPGVLITFVSLPGGGNDLKRIRFSRDMFNKLQAQRWWADNYDKVMELYN). Disordered stretches follow at residues 214–270 (FPLP…DHNS) and 304–325 (SIRSSSSRDADRSEEMSVSNAS). Basic and acidic residues predominate over residues 221 to 235 (RSEDENAKVEYHPED). Residues 260–270 (YSSSDSLDHNS) are compositionally biased toward polar residues. Residues 309-318 (SSRDADRSEE) are compositionally biased toward basic and acidic residues. The BRX 2 domain occupies 329-384 (NEWVEQDEPGVYITIKVLPGGKRELRRVRFSRERFGEMHARLWWEENRARIHEQYL).

This sequence belongs to the BRX family. Expressed in roots.

The protein resides in the nucleus. This chain is Protein Brevis radix-like 4 (BRXL4), found in Arabidopsis thaliana (Mouse-ear cress).